Here is a 384-residue protein sequence, read N- to C-terminus: MSEQLVTPENVTTKDGKINLLDLNRQQMREFFKDLGEKPFRADQVMKWMYHYCCDNFDEMTDINKVLRGKLKEVAEIRAPEVVEEQRSSDGTIKWAIAVGDQRVETVYIPEDDRATLCVSSQVGCALECKFCSTAQQGFNRNLRVSEIIGQVWRAAKIVGAAKVTGQRPITNVVMMGMGEPLLNLNNVVPAMEIMLDDFGFGLSKRRVTLSTSGVVPALDKLGDMIDVALAISLHAPNDEIRDEIVPINKKYNIETFLAAVRCYLEKSNANQGRVTIEYVMLDHVNDGTEHAHQLAELLKDTPCKINLIPWNPFPGAPYGRSSNSRIDRFSKVLMSYGFTTIVRKTRGDDIDAACGQLAGDVIDRTKRTLRKRMQGEAIDIKAV.

The Proton acceptor role is filled by Glu-105. The Radical SAM core domain maps to 111 to 350 (EDDRATLCVS…TIVRKTRGDD (240 aa)). Cysteines 118 and 355 form a disulfide. 3 residues coordinate [4Fe-4S] cluster: Cys-125, Cys-129, and Cys-132. S-adenosyl-L-methionine contacts are provided by residues 179-180 (GE), Ser-211, 233-235 (SLH), and Asn-312. The active-site S-methylcysteine intermediate is Cys-355.

This sequence belongs to the radical SAM superfamily. RlmN family. Requires [4Fe-4S] cluster as cofactor.

It localises to the cytoplasm. The catalysed reaction is adenosine(2503) in 23S rRNA + 2 reduced [2Fe-2S]-[ferredoxin] + 2 S-adenosyl-L-methionine = 2-methyladenosine(2503) in 23S rRNA + 5'-deoxyadenosine + L-methionine + 2 oxidized [2Fe-2S]-[ferredoxin] + S-adenosyl-L-homocysteine. It carries out the reaction adenosine(37) in tRNA + 2 reduced [2Fe-2S]-[ferredoxin] + 2 S-adenosyl-L-methionine = 2-methyladenosine(37) in tRNA + 5'-deoxyadenosine + L-methionine + 2 oxidized [2Fe-2S]-[ferredoxin] + S-adenosyl-L-homocysteine. Specifically methylates position 2 of adenine 2503 in 23S rRNA and position 2 of adenine 37 in tRNAs. m2A2503 modification seems to play a crucial role in the proofreading step occurring at the peptidyl transferase center and thus would serve to optimize ribosomal fidelity. The sequence is that of Dual-specificity RNA methyltransferase RlmN from Escherichia coli O17:K52:H18 (strain UMN026 / ExPEC).